We begin with the raw amino-acid sequence, 417 residues long: S-adenosylmethionine synthase (417 aa).

ATP is bound at residue His16. Asp18 is a Mg(2+) binding site. Glu44 contacts K(+). L-methionine contacts are provided by Glu57 and Gln100. The interval 100 to 110 (QSPDIAQGVDT) is flexible loop. Residues 175–177 (DGK), 251–252 (KF), Asp260, 266–267 (RK), Ala283, and Lys287 each bind ATP. Asp260 contributes to the L-methionine binding site. Lys291 contributes to the L-methionine binding site.

Belongs to the AdoMet synthase family. As to quaternary structure, homotetramer; dimer of dimers. Mg(2+) serves as cofactor. The cofactor is K(+).

Its subcellular location is the cytoplasm. The enzyme catalyses L-methionine + ATP + H2O = S-adenosyl-L-methionine + phosphate + diphosphate. Its pathway is amino-acid biosynthesis; S-adenosyl-L-methionine biosynthesis; S-adenosyl-L-methionine from L-methionine: step 1/1. Functionally, catalyzes the formation of S-adenosylmethionine (AdoMet) from methionine and ATP. The overall synthetic reaction is composed of two sequential steps, AdoMet formation and the subsequent tripolyphosphate hydrolysis which occurs prior to release of AdoMet from the enzyme. This Synechococcus elongatus (strain ATCC 33912 / PCC 7942 / FACHB-805) (Anacystis nidulans R2) protein is S-adenosylmethionine synthase.